A 291-amino-acid polypeptide reads, in one-letter code: tRNA U34 carboxymethyltransferase (291 aa).

Carboxy-S-adenosyl-L-methionine contacts are provided by residues Lys61, Trp75, Lys80, Gly100, 122–124, 149–150, Tyr169, and Arg284; these read DPS and VE.

The protein belongs to the class I-like SAM-binding methyltransferase superfamily. CmoB family. In terms of assembly, homotetramer.

The enzyme catalyses carboxy-S-adenosyl-L-methionine + 5-hydroxyuridine(34) in tRNA = 5-carboxymethoxyuridine(34) in tRNA + S-adenosyl-L-homocysteine + H(+). Its function is as follows. Catalyzes carboxymethyl transfer from carboxy-S-adenosyl-L-methionine (Cx-SAM) to 5-hydroxyuridine (ho5U) to form 5-carboxymethoxyuridine (cmo5U) at position 34 in tRNAs. This chain is tRNA U34 carboxymethyltransferase, found in Campylobacter jejuni subsp. jejuni serotype O:2 (strain ATCC 700819 / NCTC 11168).